We begin with the raw amino-acid sequence, 556 residues long: Zinc finger protein GLI1 (556 aa).

Disordered stretches follow at residues 57–83, 133–178, and 200–222; these read TEHPGGAADGSRFSTPRGAGKLGKKRA, SLGY…TPAR, and KYPEEKSEGDISSPASTGTQDPL. Over residues 135-148 the composition is skewed to low complexity; the sequence is GYQNPPGQQKGQGQ. 5 C2H2-type zinc fingers span residues 247–272, 280–307, 313–337, 343–368, and 374–399; these read TNCYWDGCAKEFDTQEQLVHHINNEH, FVCHWAACSREQRPFKAQYMLVVHMRRH, HKCTFEGCNKAYSRLENLKTHLRSH, YVCEHEGCNKAFSNASDRAKHQNRTH, and YICKIPGCTKRYTDPSSLRKHVKTVH. The interval 295-303 is interaction with DNA; that stretch reads KAQYMLVVH. Interaction with DNA regions lie at residues 357–362 and 387–393; these read ASDRAK and DPSSLRK. Residues 387 to 492 are disordered; that stretch reads DPSSLRKHVK…VEMTGNTGGS (106 aa). Residues 454-472 show a composition bias toward low complexity; the sequence is SKPQPSPGGQSSCSSDRSP.

It belongs to the GLI C2H2-type zinc-finger protein family.

It localises to the cytoplasm. The protein localises to the nucleus. In terms of biological role, acts as a transcriptional activator. Binds to the DNA consensus sequence 5'-GACCACCCA-3'. May regulate the transcription of specific genes during normal development. May play a role in craniofacial development and digital development, as well as development of the central nervous system and gastrointestinal tract. Mediates SHH signaling. Plays a role in cell proliferation and differentiation via its role in SHH signaling. The chain is Zinc finger protein GLI1 (GLI1) from Gallus gallus (Chicken).